The primary structure comprises 462 residues: Solute carrier family 41 member 3 (462 aa).

The next 9 helical transmembrane spans lie at Cys41–Met61, Leu121–Met141, Val163–Gly183, Ile194–Met214, Trp225–Ile245, Tyr258–Ser278, Val351–Glu371, Ile380–Ala400, and Gly424–Leu444.

This sequence belongs to the SLC41A transporter family.

Its subcellular location is the mitochondrion inner membrane. The enzyme catalyses Mg(2+)(in) + 2 Na(+)(out) = Mg(2+)(out) + 2 Na(+)(in). Na(+)/Mg(2+) ion exchanger that acts as a predominant Mg(2+) efflux system at the mitochondrial inner membrane. This is Solute carrier family 41 member 3 (Slc41a3) from Rattus norvegicus (Rat).